Consider the following 81-residue polypeptide: Cytotoxin I-like T-15 (81 aa).

An N-terminal signal peptide occupies residues 1 to 21; sequence MKTLLLTLVVVTIVCLDLGYT. 4 disulfides stabilise this stretch: Cys-24–Cys-42, Cys-35–Cys-59, Cys-63–Cys-74, and Cys-75–Cys-80.

It belongs to the three-finger toxin family. Short-chain subfamily. Type IA cytotoxin sub-subfamily. As to quaternary structure, monomer in solution; Homodimer and oligomer in the presence of negatively charged lipids forming a pore with a size ranging between 20 and 30 Angstroms. Expressed by the venom gland.

The protein localises to the secreted. Its subcellular location is the target cell membrane. Its function is as follows. Shows cytolytic activity on many different cells by forming pore in lipid membranes. In vivo, increases heart rate or kills the animal by cardiac arrest. In addition, it binds to heparin with high affinity, interacts with Kv channel-interacting protein 1 (KCNIP1) in a calcium-independent manner, and binds to integrin alpha-V/beta-3 (ITGAV/ITGB3) with moderate affinity. This is Cytotoxin I-like T-15 from Naja atra (Chinese cobra).